Reading from the N-terminus, the 133-residue chain is Glycine cleavage system H protein (133 aa).

Positions Ile24–Arg106 constitute a Lipoyl-binding domain. At Lys65 the chain carries N6-lipoyllysine.

Belongs to the GcvH family. The glycine cleavage system is composed of four proteins: P, T, L and H. (R)-lipoate serves as cofactor.

In terms of biological role, the glycine cleavage system catalyzes the degradation of glycine. The H protein shuttles the methylamine group of glycine from the P protein to the T protein. The polypeptide is Glycine cleavage system H protein (Crocosphaera subtropica (strain ATCC 51142 / BH68) (Cyanothece sp. (strain ATCC 51142))).